Here is a 264-residue protein sequence, read N- to C-terminus: Glutamate racemase (264 aa).

Residues 9–10 (DS) and 41–42 (YG) each bind substrate. The active-site Proton donor/acceptor is C72. A substrate-binding site is contributed by 73 to 74 (NT). C183 serves as the catalytic Proton donor/acceptor. A substrate-binding site is contributed by 184–185 (TH).

This sequence belongs to the aspartate/glutamate racemases family.

It carries out the reaction L-glutamate = D-glutamate. It participates in cell wall biogenesis; peptidoglycan biosynthesis. Its function is as follows. Provides the (R)-glutamate required for cell wall biosynthesis. This Geobacillus kaustophilus (strain HTA426) protein is Glutamate racemase.